The chain runs to 154 residues: Myoglobin (154 aa).

The Globin domain maps to 2-148 (GLSDGEWQIV…FRNDIAAKYK (147 aa)). Ser4 is modified (phosphoserine). His65 is a nitrite binding site. O2 is bound at residue His65. Phosphothreonine is present on Thr68. His94 is a heme b binding site.

It belongs to the globin family. As to quaternary structure, monomeric.

Its subcellular location is the cytoplasm. The protein resides in the sarcoplasm. It carries out the reaction Fe(III)-heme b-[protein] + nitric oxide + H2O = Fe(II)-heme b-[protein] + nitrite + 2 H(+). The enzyme catalyses H2O2 + AH2 = A + 2 H2O. In terms of biological role, monomeric heme protein which primary function is to store oxygen and facilitate its diffusion within muscle tissues. Reversibly binds oxygen through a pentacoordinated heme iron and enables its timely and efficient release as needed during periods of heightened demand. Depending on the oxidative conditions of tissues and cells, and in addition to its ability to bind oxygen, it also has a nitrite reductase activity whereby it regulates the production of bioactive nitric oxide. Under stress conditions, like hypoxia and anoxia, it also protects cells against reactive oxygen species thanks to its pseudoperoxidase activity. This chain is Myoglobin (MB), found in Canis lupus familiaris (Dog).